Here is a 384-residue protein sequence, read N- to C-terminus: Dual-specificity RNA methyltransferase RlmN (384 aa).

Glutamate 105 acts as the Proton acceptor in catalysis. The Radical SAM core domain maps to 111–350 (EVDRATLCVS…TIVRKTRGDD (240 aa)). Cysteine 118 and cysteine 355 are joined by a disulfide. Residues cysteine 125, cysteine 129, and cysteine 132 each contribute to the [4Fe-4S] cluster site. Residues 179 to 180 (GE), serine 211, 233 to 235 (SLH), and asparagine 312 each bind S-adenosyl-L-methionine. Cysteine 355 (S-methylcysteine intermediate) is an active-site residue.

This sequence belongs to the radical SAM superfamily. RlmN family. [4Fe-4S] cluster serves as cofactor.

It localises to the cytoplasm. The catalysed reaction is adenosine(2503) in 23S rRNA + 2 reduced [2Fe-2S]-[ferredoxin] + 2 S-adenosyl-L-methionine = 2-methyladenosine(2503) in 23S rRNA + 5'-deoxyadenosine + L-methionine + 2 oxidized [2Fe-2S]-[ferredoxin] + S-adenosyl-L-homocysteine. It carries out the reaction adenosine(37) in tRNA + 2 reduced [2Fe-2S]-[ferredoxin] + 2 S-adenosyl-L-methionine = 2-methyladenosine(37) in tRNA + 5'-deoxyadenosine + L-methionine + 2 oxidized [2Fe-2S]-[ferredoxin] + S-adenosyl-L-homocysteine. In terms of biological role, specifically methylates position 2 of adenine 2503 in 23S rRNA and position 2 of adenine 37 in tRNAs. m2A2503 modification seems to play a crucial role in the proofreading step occurring at the peptidyl transferase center and thus would serve to optimize ribosomal fidelity. The chain is Dual-specificity RNA methyltransferase RlmN from Escherichia coli O9:H4 (strain HS).